A 356-amino-acid polypeptide reads, in one-letter code: S-adenosylmethionine:tRNA ribosyltransferase-isomerase (356 aa).

Belongs to the QueA family. As to quaternary structure, monomer.

The protein localises to the cytoplasm. The catalysed reaction is 7-aminomethyl-7-carbaguanosine(34) in tRNA + S-adenosyl-L-methionine = epoxyqueuosine(34) in tRNA + adenine + L-methionine + 2 H(+). Its pathway is tRNA modification; tRNA-queuosine biosynthesis. Its function is as follows. Transfers and isomerizes the ribose moiety from AdoMet to the 7-aminomethyl group of 7-deazaguanine (preQ1-tRNA) to give epoxyqueuosine (oQ-tRNA). This is S-adenosylmethionine:tRNA ribosyltransferase-isomerase from Escherichia fergusonii (strain ATCC 35469 / DSM 13698 / CCUG 18766 / IAM 14443 / JCM 21226 / LMG 7866 / NBRC 102419 / NCTC 12128 / CDC 0568-73).